A 437-amino-acid polypeptide reads, in one-letter code: MASSSSFTYYCPPSSSPVWSEPLYSLRPEHARERLQDDSVETVTSIEQAKVEEKIQEVFSSYKFNHLVPRLVLQREKHFHYLKRGLRQLTDAYECLDASRPWLCYWILHSLELLDEPIPQIVATDVCQFLELCQSPDGGFGGGPGQYPHLAPTYAAVNALCIIGTEEAYNVINREKLLQYLYSLKQPDGSFLMHVGGEVDVRSAYCAASVASLTNIITPDLFEGTAEWIARCQNWEGGIGGVPGMEAHGGYTFCGLAALVILKKERSLNLKSLLQWVTSRQMRFEGGFQGRCNKLVDGCYSFWQAGLLPLLHRALHAQGDPALSMSHWMFHQQALQEYILMCCQCPAGGLLDKPGKSRDFYHTCYCLSGLSIAQHFGSGAMLHDVVMGVPENVLQPTHPVYNIGPDKVIQATTHFLQKPVPGFEECEDAVTSDPATD.

PFTB repeat units follow at residues 123–164 (ATDV…CIIG), 174–215 (REKL…SLTN), 222–263 (FEGT…VILK), 270–312 (LKSL…PLLH), and 332–374 (QQAL…SIAQ). Residues 248 to 251 (HGGY) and 291 to 294 (RCNK) each bind (2E,6E)-farnesyl diphosphate. 2 residues coordinate Zn(2+): aspartate 297 and cysteine 299. 300 to 303 (YSFW) contributes to the (2E,6E)-farnesyl diphosphate binding site. Residue histidine 362 coordinates Zn(2+). Serine 432 carries the post-translational modification Phosphoserine. A Phosphothreonine modification is found at threonine 436.

It belongs to the protein prenyltransferase subunit beta family. Heterodimer of FNTA and FNTB. The cofactor is Zn(2+).

The catalysed reaction is L-cysteinyl-[protein] + (2E,6E)-farnesyl diphosphate = S-(2E,6E)-farnesyl-L-cysteinyl-[protein] + diphosphate. Functionally, essential subunit of the farnesyltransferase complex. Catalyzes the transfer of a farnesyl moiety from farnesyl diphosphate to a cysteine at the fourth position from the C-terminus of several proteins having the C-terminal sequence Cys-aliphatic-aliphatic-X. The sequence is that of Protein farnesyltransferase subunit beta (Fntb) from Rattus norvegicus (Rat).